The primary structure comprises 133 residues: Small ribosomal subunit protein uS19 (133 aa).

It belongs to the universal ribosomal protein uS19 family. Part of the 30S ribosomal subunit.

Functionally, protein S19 forms a complex with S13 that binds strongly to the 16S ribosomal RNA. This Thermococcus kodakarensis (strain ATCC BAA-918 / JCM 12380 / KOD1) (Pyrococcus kodakaraensis (strain KOD1)) protein is Small ribosomal subunit protein uS19.